Consider the following 163-residue polypeptide: MTRKSFPFFLLGLILTVGIDQAVKYWVMHNIPLGTETPLLPFLSLYHVRNSGIAFSFFSSFSHWGLIFLTLIILIFLLWLWKNTQYNKSLTRFGFTLIIGGAIGNLIDRICFYYVIDYILFYINDVFYFAVFNLADTFITLGVIAIIIEELLSWIKRKSTFSE.

Transmembrane regions (helical) follow at residues 8-28 (FFLL…YWVM), 61-81 (FSHW…LWLW), and 93-113 (FGFT…ICFY). Residues Asp-117 and Asp-136 contribute to the active site. Residues 128 to 148 (YFAVFNLADTFITLGVIAIII) form a helical membrane-spanning segment.

The protein belongs to the peptidase A8 family.

The protein resides in the cell inner membrane. The catalysed reaction is Release of signal peptides from bacterial membrane prolipoproteins. Hydrolyzes -Xaa-Yaa-Zaa-|-(S,diacylglyceryl)Cys-, in which Xaa is hydrophobic (preferably Leu), and Yaa (Ala or Ser) and Zaa (Gly or Ala) have small, neutral side chains.. Its pathway is protein modification; lipoprotein biosynthesis (signal peptide cleavage). Functionally, this protein specifically catalyzes the removal of signal peptides from prolipoproteins. The chain is Lipoprotein signal peptidase from Bartonella henselae (strain ATCC 49882 / DSM 28221 / CCUG 30454 / Houston 1) (Rochalimaea henselae).